A 574-amino-acid polypeptide reads, in one-letter code: Serine carboxypeptidase ctsa-3.1 (574 aa).

Residues 1–19 (MCRTLLGVAFLVVTVLSQG) form the signal peptide. N-linked (GlcNAc...) asparagine glycosylation is found at Asn-48 and Asn-163. The active site involves Ser-172. N-linked (GlcNAc...) asparagine glycans are attached at residues Asn-241, Asn-408, Asn-414, and Asn-426. Residues Asp-441 and His-507 contribute to the active site. Asn-534 carries N-linked (GlcNAc...) asparagine glycosylation.

The protein belongs to the peptidase S10 family.

The polypeptide is Serine carboxypeptidase ctsa-3.1 (Caenorhabditis elegans).